We begin with the raw amino-acid sequence, 218 residues long: Ribosomal RNA small subunit methyltransferase G (218 aa).

S-adenosyl-L-methionine-binding positions include Gly-82, Leu-87, 133-134 (VE), and Arg-147.

Belongs to the methyltransferase superfamily. RNA methyltransferase RsmG family.

The protein localises to the cytoplasm. It carries out the reaction guanosine(527) in 16S rRNA + S-adenosyl-L-methionine = N(7)-methylguanosine(527) in 16S rRNA + S-adenosyl-L-homocysteine. In terms of biological role, specifically methylates the N7 position of guanine in position 527 of 16S rRNA. The protein is Ribosomal RNA small subunit methyltransferase G of Leptothrix cholodnii (strain ATCC 51168 / LMG 8142 / SP-6) (Leptothrix discophora (strain SP-6)).